The chain runs to 328 residues: MADLLNVLKDKLSGKNVKIVLPEGEDERVLTAATQLQATDYVTPIVLGDETKVQSLAQKLDLDISNIELINPATSELKAELVQSFVERRKGKATEEQAQELLNNVNYFGTMLVYAGKADGLVSGAAHSTGDTVRPALQIIKTKPGVSRTSGIFFMIKGDVQYIFGDCAINPELDSQGLAEIAVESAKSALSFGMDPKVAMLSFSTKGSAKSDDVTKVQEAVKLAQQKAEEEKLEAIIDGEFQFDAAIVPGVAEKKAPGAKLQGDANVFVFPSLEAGNIGYKIAQRLGGYDAVGPVLQGLNSPVNDLSRGCSIEDVYNLSIITAAQALQ.

Belongs to the phosphate acetyltransferase and butyryltransferase family.

It is found in the cytoplasm. The enzyme catalyses acetyl-CoA + phosphate = acetyl phosphate + CoA. It functions in the pathway metabolic intermediate biosynthesis; acetyl-CoA biosynthesis; acetyl-CoA from acetate: step 2/2. The polypeptide is Phosphate acetyltransferase (pta) (Staphylococcus aureus (strain MSSA476)).